A 172-amino-acid polypeptide reads, in one-letter code: MRAFIVGRWQPFHKGHLEIIKKISEEVDEIIIGIGSCQRSHTLTDPFTAGERIMMITKALGRYNINYYIIPINDIDFNAVWVSCVESLTPPFDTVYTGNSLVRELFSEKNYVVKKPELYNRKEYSGTEIRKKMLKGEKWEHFVPEEVVDVILEIDGIGRIKRLDEKDYDDYF.

The protein belongs to the archaeal NMN adenylyltransferase family.

The protein resides in the cytoplasm. It carries out the reaction beta-nicotinamide D-ribonucleotide + ATP + H(+) = diphosphate + NAD(+). It participates in cofactor biosynthesis; NAD(+) biosynthesis; NAD(+) from nicotinamide D-ribonucleotide: step 1/1. The polypeptide is Nicotinamide-nucleotide adenylyltransferase (Methanococcus vannielii (strain ATCC 35089 / DSM 1224 / JCM 13029 / OCM 148 / SB)).